The chain runs to 346 residues: MRSQDLHQRLADLGAKPLHCGRIVRAWLQGRALDACTARQPAEDFLPLGVRHGLPQVAAELEGIARLHSEHPASDGSSRLLVELADRQMVESVLLPRGGLCVSTQVGCAVGCVFCMTGRSGLLRQVGSLEMVAQVVLARRRRAVKKVVFMGMGEPAHNLDNVLEAIDLLGTDGGIGHKNLVFSTVGDPRVFERLPLQRVKPALALSLHSTRAELRRQLLPKAPPLSPEELVEAGEAYARRVDYPIQYQWTLLEGINDSLEEMDGILRLLKGRFAVMNLIPYNSMDGDAYRRPSGERIVELVRYLHSRGVLTKVRNSAGQDIDGGCGQLRARATQGTAERRIPARQA.

Glutamate 91 acts as the Proton acceptor in catalysis. The 227-residue stretch at 94–320 folds into the Radical SAM core domain; it reads LLPRGGLCVS…TKVRNSAGQD (227 aa). The cysteines at positions 101 and 325 are disulfide-linked. The [4Fe-4S] cluster site is built by cysteine 108, cysteine 112, and cysteine 115. S-adenosyl-L-methionine contacts are provided by residues 153–154, serine 183, 206–208, and asparagine 282; these read GE and SLH. Cysteine 325 acts as the S-methylcysteine intermediate in catalysis.

It belongs to the radical SAM superfamily. RlmN family. It depends on [4Fe-4S] cluster as a cofactor.

It localises to the cytoplasm. The sequence is that of Probable RNA methyltransferase PA14_40730 from Pseudomonas aeruginosa (strain UCBPP-PA14).